The chain runs to 1343 residues: DNA-directed RNA polymerase subunit beta (1343 aa).

Belongs to the RNA polymerase beta chain family. In terms of assembly, the RNAP catalytic core consists of 2 alpha, 1 beta, 1 beta' and 1 omega subunit. When a sigma factor is associated with the core the holoenzyme is formed, which can initiate transcription.

The enzyme catalyses RNA(n) + a ribonucleoside 5'-triphosphate = RNA(n+1) + diphosphate. In terms of biological role, DNA-dependent RNA polymerase catalyzes the transcription of DNA into RNA using the four ribonucleoside triphosphates as substrates. The chain is DNA-directed RNA polymerase subunit beta from Haemophilus influenzae (strain 86-028NP).